Reading from the N-terminus, the 293-residue chain is Protein phosphatase 1 regulatory subunit 3B (293 aa).

One can recognise a CBM21 domain in the interval 129 to 237 (RQRIENDHVC…NNQGKNYRII (109 aa)).

In terms of assembly, interacts with glycogen, PPP1CC catalytic subunit of PP1 and PYGL. Associates with glycogen particles. Forms complexes with debranching enzyme, glycogen phosphorylase, glycogen synthase and phosphorylase kinase which is necessary for its regulation of PP1 activity.

Its function is as follows. Acts as a glycogen-targeting subunit for phosphatase PP1. Facilitates interaction of the PP1 with enzymes of the glycogen metabolism and regulates its activity. Suppresses the rate at which PP1 dephosphorylates (inactivates) glycogen phosphorylase and enhances the rate at which it activates glycogen synthase and therefore limits glycogen breakdown. The polypeptide is Protein phosphatase 1 regulatory subunit 3B (ppp1r3b) (Danio rerio (Zebrafish)).